The following is a 433-amino-acid chain: Glucose-1-phosphate adenylyltransferase (433 aa).

Alpha-D-glucose 1-phosphate contacts are provided by residues Tyr-117, Gly-182, 197 to 198 (EK), and Ser-215.

It belongs to the bacterial/plant glucose-1-phosphate adenylyltransferase family. In terms of assembly, homotetramer.

The enzyme catalyses alpha-D-glucose 1-phosphate + ATP + H(+) = ADP-alpha-D-glucose + diphosphate. It functions in the pathway glycan biosynthesis; glycogen biosynthesis. In terms of biological role, involved in the biosynthesis of ADP-glucose, a building block required for the elongation reactions to produce glycogen. Catalyzes the reaction between ATP and alpha-D-glucose 1-phosphate (G1P) to produce pyrophosphate and ADP-Glc. In Nitrosomonas europaea (strain ATCC 19718 / CIP 103999 / KCTC 2705 / NBRC 14298), this protein is Glucose-1-phosphate adenylyltransferase.